A 240-amino-acid chain; its full sequence is Mannose-binding protein C (240 aa).

Residues 1 to 18 (MSLFPSLHLLLLIVMTAS) form the signal peptide. 2 consecutive Collagen-like domains span residues 39–61 (SPGI…KGEP) and 67–97 (GLQG…GDSG). At Pro46 the chain carries Hydroxyproline. The disordered stretch occupies residues 48 to 102 (KDGLDGAKGEKGEPGQGLIGLQGLPGMVGPQGSPGIPGLPGLKGQKGDSGIDPGN). Basic and acidic residues predominate over residues 49–60 (DGLDGAKGEKGE). Hydroxyproline is present on residues Pro72, Pro81, and Pro87. A coiled-coil region spans residues 104 to 122 (LANLRSELDNIKKWLIFAQ). The region spanning 126–237 (VGKKLYLTNG…CSSQLSAVCE (112 aa)) is the C-type lectin domain. 2 cysteine pairs are disulfide-bonded: Cys147-Cys236 and Cys214-Cys228.

As to quaternary structure, interacts with MASP1 and MASP2. Interacts with MEP1A and MEP1B and may inhibit their catalytic activity. Forms oligomeric complexes of 2 or 3 homotrimers. As to expression, expressed in liver. Weakly expressed in kidney and testis.

The protein resides in the secreted. Functionally, calcium-dependent lectin involved in innate immune defense. Binds mannose, fucose and N-acetylglucosamine on different microorganisms and activates the lectin complement pathway. Binds to late apoptotic cells, as well as to apoptotic blebs and to necrotic cells, but not to early apoptotic cells, facilitating their uptake by macrophages. According to some authors, it only binds mannose. This Sus scrofa (Pig) protein is Mannose-binding protein C.